The primary structure comprises 82 residues: Small ribosomal subunit protein bS18 (82 aa).

It belongs to the bacterial ribosomal protein bS18 family. Part of the 30S ribosomal subunit. Forms a tight heterodimer with protein bS6.

In terms of biological role, binds as a heterodimer with protein bS6 to the central domain of the 16S rRNA, where it helps stabilize the platform of the 30S subunit. The protein is Small ribosomal subunit protein bS18 of Methylobacterium nodulans (strain LMG 21967 / CNCM I-2342 / ORS 2060).